We begin with the raw amino-acid sequence, 787 residues long: Protein translocase subunit SecA (787 aa).

Residues Gln-85, 103 to 107 (GEGKT), and Asp-492 each bind ATP.

The protein belongs to the SecA family. In terms of assembly, monomer and homodimer. Part of the essential Sec protein translocation apparatus which comprises SecA, SecYEG and auxiliary proteins SecDF. Other proteins may also be involved.

It is found in the cell membrane. It localises to the cytoplasm. The catalysed reaction is ATP + H2O + cellular proteinSide 1 = ADP + phosphate + cellular proteinSide 2.. Part of the Sec protein translocase complex. Interacts with the SecYEG preprotein conducting channel. Has a central role in coupling the hydrolysis of ATP to the transfer of proteins into and across the cell membrane, serving as an ATP-driven molecular motor driving the stepwise translocation of polypeptide chains across the membrane. This is Protein translocase subunit SecA from Limosilactobacillus reuteri (strain DSM 20016) (Lactobacillus reuteri).